The sequence spans 447 residues: N-succinylarginine dihydrolase (447 aa).

Substrate-binding positions include 19–28 (AGLSFGNEAS), asparagine 110, and 137–138 (HR). Residue glutamate 174 is part of the active site. Arginine 212 contributes to the substrate binding site. The active site involves histidine 248. Residues aspartate 250 and asparagine 359 each contribute to the substrate site. The Nucleophile role is filled by cysteine 365.

The protein belongs to the succinylarginine dihydrolase family. As to quaternary structure, homodimer.

It catalyses the reaction N(2)-succinyl-L-arginine + 2 H2O + 2 H(+) = N(2)-succinyl-L-ornithine + 2 NH4(+) + CO2. It functions in the pathway amino-acid degradation; L-arginine degradation via AST pathway; L-glutamate and succinate from L-arginine: step 2/5. Functionally, catalyzes the hydrolysis of N(2)-succinylarginine into N(2)-succinylornithine, ammonia and CO(2). This Salmonella gallinarum (strain 287/91 / NCTC 13346) protein is N-succinylarginine dihydrolase.